Here is a 292-residue protein sequence, read N- to C-terminus: Tetrahydromethanopterin:alpha-L-glutamate ligase (292 aa).

The ATP-grasp domain occupies 103–286; it reads SFLMEVHKIP…IAQNLIDEAL (184 aa). ATP contacts are provided by residues Lys-138, 176–188, and Arg-204; that span reads QEFVNNPNNVYRD. The Mg(2+) site is built by Asp-247, Glu-259, and Asn-261. 3 residues coordinate Mn(2+): Asp-247, Glu-259, and Asn-261.

Belongs to the RimK family. MptN subfamily. In terms of assembly, homodimer. Requires Mg(2+) as cofactor. The cofactor is Mn(2+).

The catalysed reaction is 5,6,7,8-tetrahydromethanopterin + L-glutamate + ATP = 5,6,7,8-tetrahydrosarcinapterin + ADP + phosphate + H(+). It participates in cofactor biosynthesis; 5,6,7,8-tetrahydrosarcinapterin biosynthesis. In terms of biological role, catalyzes the ATP or GTP-dependent addition of one L-glutamate molecule to tetrahydromethanopterin, producing tetrahydrosarcinapterin. The polypeptide is Tetrahydromethanopterin:alpha-L-glutamate ligase (mptN) (Methanococcus maripaludis (strain DSM 14266 / JCM 13030 / NBRC 101832 / S2 / LL)).